Here is a 327-residue protein sequence, read N- to C-terminus: Tryptophan--tRNA ligase (327 aa).

ATP contacts are provided by residues R9–T11 and G17–N18. The 'HIGH' region motif lies at P10 to N18. Residue D133 participates in L-tryptophan binding. Residues G145–D147, V186, and K194–S198 contribute to the ATP site. A 'KMSKS' region motif is present at residues K194–S198.

Belongs to the class-I aminoacyl-tRNA synthetase family. Homodimer.

It localises to the cytoplasm. It catalyses the reaction tRNA(Trp) + L-tryptophan + ATP = L-tryptophyl-tRNA(Trp) + AMP + diphosphate + H(+). In terms of biological role, catalyzes the attachment of tryptophan to tRNA(Trp). The chain is Tryptophan--tRNA ligase from Porphyromonas gingivalis (strain ATCC BAA-308 / W83).